We begin with the raw amino-acid sequence, 69 residues long: Conotoxin Eb6.19 (69 aa).

A signal peptide spans 1–17 (VLIIAVLFLTACQLTTA). Positions 18–41 (ETYSRGRQKHRARRSTDKNSKWTR) are excised as a propeptide. 3 disulfide bridges follow: Cys-43–Cys-57, Cys-50–Cys-61, and Cys-56–Cys-68.

It belongs to the conotoxin O1 superfamily. As to expression, expressed by the venom duct.

The protein resides in the secreted. This Conus ebraeus (Hebrew cone) protein is Conotoxin Eb6.19 (E1).